The chain runs to 298 residues: Small ribosomal subunit protein uS2 (298 aa).

Composition is skewed to basic and acidic residues over residues 237-259 and 280-298; these read QSKE…DGQK and PKSE…ENKG. The segment at 237 to 298 is disordered; the sequence is QSKELDDKAD…DAAKLPENKG (62 aa).

This sequence belongs to the universal ribosomal protein uS2 family.

This chain is Small ribosomal subunit protein uS2, found in Neorickettsia sennetsu (strain ATCC VR-367 / Miyayama) (Ehrlichia sennetsu).